Reading from the N-terminus, the 388-residue chain is Xylose isomerase (388 aa).

Active-site residues include His-54 and Asp-57. Mg(2+) contacts are provided by Glu-181, Glu-217, His-220, Asp-245, Asp-255, Asp-257, and Asp-287.

The protein belongs to the xylose isomerase family. As to quaternary structure, homotetramer. Mg(2+) is required as a cofactor.

The protein resides in the cytoplasm. The enzyme catalyses alpha-D-xylose = alpha-D-xylulofuranose. The sequence is that of Xylose isomerase from Streptomyces corchorusii (Streptomyces chibaensis).